A 75-amino-acid chain; its full sequence is Conotoxin Vc6.15 (75 aa).

The first 19 residues, methionine 1–alanine 19, serve as a signal peptide directing secretion. A propeptide spanning residues leucine 20–glutamate 41 is cleaved from the precursor. 3 cysteine pairs are disulfide-bonded: cysteine 49-cysteine 62, cysteine 55-cysteine 66, and cysteine 61-cysteine 71.

This sequence belongs to the conotoxin O2 superfamily. Expressed by the venom duct.

Its subcellular location is the secreted. Its function is as follows. Inhibits voltage-gated ion channels. The sequence is that of Conotoxin Vc6.15 from Conus victoriae (Queen Victoria cone).